A 288-amino-acid chain; its full sequence is Protoheme IX farnesyltransferase 2 (288 aa).

Helical transmembrane passes span Ile-8 to Ala-28, Leu-36 to Val-56, Val-85 to Val-105, Leu-108 to Tyr-128, Asn-131 to Tyr-151, Leu-152 to Trp-172, Ala-211 to Tyr-231, Tyr-233 to Ile-252, and Val-267 to Ala-287.

Belongs to the UbiA prenyltransferase family. Protoheme IX farnesyltransferase subfamily.

It localises to the cell inner membrane. It carries out the reaction heme b + (2E,6E)-farnesyl diphosphate + H2O = Fe(II)-heme o + diphosphate. The protein operates within porphyrin-containing compound metabolism; heme O biosynthesis; heme O from protoheme: step 1/1. In terms of biological role, converts heme B (protoheme IX) to heme O by substitution of the vinyl group on carbon 2 of heme B porphyrin ring with a hydroxyethyl farnesyl side group. This Vibrio parahaemolyticus serotype O3:K6 (strain RIMD 2210633) protein is Protoheme IX farnesyltransferase 2.